The primary structure comprises 411 residues: Arginine deiminase (411 aa).

The active-site Amidino-cysteine intermediate is Cys399.

This sequence belongs to the arginine deiminase family.

The protein resides in the cytoplasm. The enzyme catalyses L-arginine + H2O = L-citrulline + NH4(+). It participates in amino-acid degradation; L-arginine degradation via ADI pathway; carbamoyl phosphate from L-arginine: step 1/2. The polypeptide is Arginine deiminase (Latilactobacillus sakei subsp. sakei (strain 23K) (Lactobacillus sakei subsp. sakei)).